The sequence spans 102 residues: Putative pterin-4-alpha-carbinolamine dehydratase (102 aa).

It belongs to the pterin-4-alpha-carbinolamine dehydratase family.

It catalyses the reaction (4aS,6R)-4a-hydroxy-L-erythro-5,6,7,8-tetrahydrobiopterin = (6R)-L-erythro-6,7-dihydrobiopterin + H2O. The protein is Putative pterin-4-alpha-carbinolamine dehydratase of Burkholderia multivorans (strain ATCC 17616 / 249).